A 231-amino-acid chain; its full sequence is Cytidylate kinase 1 (231 aa).

7–15 (GPSGAGKGT) lines the ATP pocket.

It belongs to the cytidylate kinase family. Type 1 subfamily.

It localises to the cytoplasm. The catalysed reaction is CMP + ATP = CDP + ADP. It catalyses the reaction dCMP + ATP = dCDP + ADP. This chain is Cytidylate kinase 1, found in Haemophilus influenzae (strain ATCC 51907 / DSM 11121 / KW20 / Rd).